Reading from the N-terminus, the 275-residue chain is Diaminopimelate epimerase (275 aa).

The substrate site is built by asparagine 12, glutamine 45, and asparagine 65. Cysteine 74 serves as the catalytic Proton donor. Substrate is bound by residues 75 to 76 (GN), asparagine 158, asparagine 191, and 209 to 210 (ER). Catalysis depends on cysteine 218, which acts as the Proton acceptor. Substrate is bound at residue 219 to 220 (GT).

This sequence belongs to the diaminopimelate epimerase family. Homodimer.

The protein localises to the cytoplasm. It carries out the reaction (2S,6S)-2,6-diaminopimelate = meso-2,6-diaminopimelate. It functions in the pathway amino-acid biosynthesis; L-lysine biosynthesis via DAP pathway; DL-2,6-diaminopimelate from LL-2,6-diaminopimelate: step 1/1. Its function is as follows. Catalyzes the stereoinversion of LL-2,6-diaminopimelate (L,L-DAP) to meso-diaminopimelate (meso-DAP), a precursor of L-lysine and an essential component of the bacterial peptidoglycan. This is Diaminopimelate epimerase from Shewanella baltica (strain OS223).